The following is a 161-amino-acid chain: Protein shisa-like-2B (161 aa).

A helical transmembrane segment spans residues 65–85 (IGALIGLGIAALVLLAFVISV). Residues 115 to 134 (QEGNSNRKSKAPRSNAASNS) are disordered.

The protein belongs to the shisa family.

It localises to the membrane. The sequence is that of Protein shisa-like-2B (SHISAL2B) from Bos taurus (Bovine).